The following is a 624-amino-acid chain: ERAD-associated E3 ubiquitin-protein ligase ASI1 (624 aa).

Topologically, residues 1–69 (MNSSTSSENV…SEEIPPTLRS (69 aa)) are perinuclear space. N-linked (GlcNAc...) asparagine glycans are attached at residues Asn-2, Asn-19, and Asn-29. Residues 70–90 (VFDTIGFFFSPYAIFCFVIAI) form a helical membrane-spanning segment. The Nuclear segment spans residues 91 to 116 (VLNRFVVFYAVLNNGSRRTLPLWLSN). A helical membrane pass occupies residues 117–137 (VFHVSAVVVLAMVSLGPLTLG). Topologically, residues 138–152 (KDFKILGDPAFAQEK) are perinuclear space. Residues 153–173 (FLLNIFYAFAYSYCVETIFTI) traverse the membrane as a helical segment. Residues 174–209 (MRNSSPLEGTDYSLFELSIQFYTMTNNNTKFLDSPD) lie on the Nuclear side of the membrane. The helical transmembrane segment at 210–230 (YIIDCSMAILSRILIHLVEIF) threads the bilayer. The Perinuclear space segment spans residues 231 to 273 (RLRNYRLLFSTIMNLCHICYLGIRVKQGGWKSLPFSVKFRHFP). The chain crosses the membrane as a helical span at residues 274–294 (KLFSVSIICLSLLIFKLSCLI). The Nuclear portion of the chain corresponds to 295 to 624 (RWDPFGKSRN…CKVHPVSDSK (330 aa)). Residues 467-490 (TSDDEYSEDYEPSEVESLGDSDEE) form a disordered region. Acidic residues predominate over residues 468 to 490 (SDDEYSEDYEPSEVESLGDSDEE). The RING-type; atypical zinc-finger motif lies at 568-608 (CAVCKVNERNTVLWPCRCFAICEDCRISLGLRGFSTCVCCR).

Component of the Asi complex, which contains ASI1, ASI2 and ASI3. Interacts directly with ASI3. Post-translationally, glycosylation is not required for ASI1 function.

It localises to the nucleus inner membrane. It carries out the reaction S-ubiquitinyl-[E2 ubiquitin-conjugating enzyme]-L-cysteine + [acceptor protein]-L-lysine = [E2 ubiquitin-conjugating enzyme]-L-cysteine + N(6)-ubiquitinyl-[acceptor protein]-L-lysine.. In terms of biological role, E3 ubiquitin-protein ligase which transfers ubiquitin to substrates promoting their degradation. Part of the nuclear inner membrane (INM)-specific branch of the ER-associated degradation (ERAD) pathway, required for the elimination of misfolded proteins in the INM, a specialized ER subdomain. Required for ERG11 degradation. Negative regulator of SPS-sensor signaling. Together with ASI2 and ASI3, prevents the unprocessed precursor forms of STP1 and STP2 that escape cytoplasmic anchoring from inducing SPS-sensor-regulated genes in the absence of inducing signals. Controls amino acid permease (AAP) gene expression in response to amino acid availability, a process mediated by the transcription factors STP1 and STP1. The sequence is that of ERAD-associated E3 ubiquitin-protein ligase ASI1 (ASI1) from Saccharomyces cerevisiae (strain ATCC 204508 / S288c) (Baker's yeast).